Here is a 466-residue protein sequence, read N- to C-terminus: Asparagine--tRNA ligase (466 aa).

The protein belongs to the class-II aminoacyl-tRNA synthetase family. As to quaternary structure, homodimer.

It localises to the cytoplasm. The catalysed reaction is tRNA(Asn) + L-asparagine + ATP = L-asparaginyl-tRNA(Asn) + AMP + diphosphate + H(+). In Buchnera aphidicola subsp. Acyrthosiphon pisum (strain APS) (Acyrthosiphon pisum symbiotic bacterium), this protein is Asparagine--tRNA ligase.